Consider the following 160-residue polypeptide: Crossover junction endodeoxyribonuclease RuvC (160 aa).

Active-site residues include D7, E70, and D142. Mg(2+) contacts are provided by D7, E70, and D142.

The protein belongs to the RuvC family. As to quaternary structure, homodimer which binds Holliday junction (HJ) DNA. The HJ becomes 2-fold symmetrical on binding to RuvC with unstacked arms; it has a different conformation from HJ DNA in complex with RuvA. In the full resolvosome a probable DNA-RuvA(4)-RuvB(12)-RuvC(2) complex forms which resolves the HJ. Mg(2+) serves as cofactor.

The protein localises to the cytoplasm. It catalyses the reaction Endonucleolytic cleavage at a junction such as a reciprocal single-stranded crossover between two homologous DNA duplexes (Holliday junction).. The RuvA-RuvB-RuvC complex processes Holliday junction (HJ) DNA during genetic recombination and DNA repair. Endonuclease that resolves HJ intermediates. Cleaves cruciform DNA by making single-stranded nicks across the HJ at symmetrical positions within the homologous arms, yielding a 5'-phosphate and a 3'-hydroxyl group; requires a central core of homology in the junction. The consensus cleavage sequence is 5'-(A/T)TT(C/G)-3'. Cleavage occurs on the 3'-side of the TT dinucleotide at the point of strand exchange. HJ branch migration catalyzed by RuvA-RuvB allows RuvC to scan DNA until it finds its consensus sequence, where it cleaves and resolves the cruciform DNA. This is Crossover junction endodeoxyribonuclease RuvC from Ehrlichia ruminantium (strain Gardel).